Consider the following 249-residue polypeptide: 2,3-bisphosphoglycerate-dependent phosphoglycerate mutase (249 aa).

Residues 9 to 16 (RHGQSQWN), 22 to 23 (TG), Arg61, 88 to 91 (ERHY), Lys99, 115 to 116 (RR), and 184 to 185 (GN) contribute to the substrate site. Residue His10 is the Tele-phosphohistidine intermediate of the active site. The Proton donor/acceptor role is filled by Glu88.

Belongs to the phosphoglycerate mutase family. BPG-dependent PGAM subfamily. Homodimer.

The catalysed reaction is (2R)-2-phosphoglycerate = (2R)-3-phosphoglycerate. It functions in the pathway carbohydrate degradation; glycolysis; pyruvate from D-glyceraldehyde 3-phosphate: step 3/5. Catalyzes the interconversion of 2-phosphoglycerate and 3-phosphoglycerate. The polypeptide is 2,3-bisphosphoglycerate-dependent phosphoglycerate mutase (Xanthomonas euvesicatoria pv. vesicatoria (strain 85-10) (Xanthomonas campestris pv. vesicatoria)).